Here is an 880-residue protein sequence, read N- to C-terminus: DNA mismatch repair protein MutS (880 aa).

631 to 638 (GPNMAGKS) is an ATP binding site. The tract at residues 835–860 (RAAPPPPAPAAPKTSPVEERLREIQP) is disordered. A compositionally biased stretch (basic and acidic residues) spans 850–860 (PVEERLREIQP).

It belongs to the DNA mismatch repair MutS family.

Functionally, this protein is involved in the repair of mismatches in DNA. It is possible that it carries out the mismatch recognition step. This protein has a weak ATPase activity. The sequence is that of DNA mismatch repair protein MutS from Cereibacter sphaeroides (strain ATCC 17029 / ATH 2.4.9) (Rhodobacter sphaeroides).